Here is a 466-residue protein sequence, read N- to C-terminus: MSHSNHFDVIVIGSGPGGEGAAMGLTKAGLNVAIIEKESSVGGGCTHWGTIPSKALRHAVSRIIEFNSNPLFCQNNKSIHSTFSNILGHAKSVIDKQTRLRQGFYDRNQCTLVFGTARFIDTHTISVMQSDGTEEHYSADKFVIATGSRPYQPDNVDFMHERVYDSDSILSLKHDPQHIIIYGAGVIGCEYASIFRGLGVKTDLINTRDRLLSFLDNETSDALSYHFWNSGVVIRNDETFEKIEGTDDGVIIHLESGKKMRADCLLYANGRTGNTDKLNLGAVGLEADSRGQVSVNSNYQTSVEHVYAVGDVIGYPSLASAAYDQGRFVAQAVVKGEAERHLIEDIPTGIYTIPEISSVGKTEQELTAAKVPYEVGRSSFKHLARAQIAGKDIGSLKILFHRETKEILGIHVFGERAAEIIHIGQAIMEQKGEANTIEYFVNTTFNYPTMAEAYRVAALNGLNRLF.

Glu-36–Cys-45 is an FAD binding site.

It belongs to the class-I pyridine nucleotide-disulfide oxidoreductase family. FAD is required as a cofactor.

The protein localises to the cytoplasm. The catalysed reaction is NAD(+) + NADPH = NADH + NADP(+). Conversion of NADPH, generated by peripheral catabolic pathways, to NADH, which can enter the respiratory chain for energy generation. The chain is Soluble pyridine nucleotide transhydrogenase from Vibrio atlanticus (strain LGP32) (Vibrio splendidus (strain Mel32)).